Consider the following 432-residue polypeptide: Competence protein ComFA (432 aa).

Positions 40, 43, 60, and 63 each coordinate Zn(2+). The 151-residue stretch at 107-257 (LQAVDKQKPT…RLGELKRLNL (151 aa)) folds into the Helicase ATP-binding domain. 120–127 (AVTGAGKT) is a binding site for ATP. The DEAD box signature appears at 205–208 (DEVD). The region spanning 289–432 (KLKSYIEKQR…IQMMNKEAGL (144 aa)) is the Helicase C-terminal domain.

It belongs to the DEAD box helicase family. As to quaternary structure, monomer and dimer in solution. Interacts with DprA and ComFC; ComFA-ComFC form rings about 150 Angstroms in diameter with apparent 6-fold symmetry. It depends on Zn(2+) as a cofactor.

The protein resides in the cytoplasm. Functionally, involved in transformation (genetic competence for DNA uptake). DNA uptake is energy dependent, this protein may provide the driving force for DNA uptake. Does not have helicase activity, translocates on single-stranded (ss)DNA in a 5'-3' direction in an ATP-dependent manner, but does not unwind double-stranded (ds)DNA (tested with 5'- and 3'-overhang dsDNA). ATP hydrolysis causes the release of ssDNA from ComFA. A ssDNA-stimulated ATPase; dsDNA does not stimulate ATPase. ATP hydrolysis causes the release of ssDNA from ComFA. ComFC has no effect on ATPase activity. Binds ssDNA but only very poorly to dsDNA in the absence of ATP. Binding to ssDNA does not require free DNA ends. This chain is Competence protein ComFA, found in Streptococcus pneumoniae (strain ATCC BAA-255 / R6).